The primary structure comprises 225 residues: Glutathione S-transferase Mu 5 (225 aa).

In terms of domain architecture, GST N-terminal spans 5–92 (KSMVLGYWDI…YIARKHNMCG (88 aa)). Phosphoserine is present on Ser-6. Glutathione contacts are provided by residues 11–12 (YW), 50–54 (WLDVK), 63–64 (NL), and 76–77 (QS). Positions 94–212 (TEEEKIRVDI…QSDRCFKMPI (119 aa)) constitute a GST C-terminal domain. Residue Tyr-120 participates in substrate binding.

The protein belongs to the GST superfamily. Mu family. Homodimer. Post-translationally, the N-terminus is blocked. Expressed in testis and brain. Very low expression in liver, kidney, heart and lung.

It is found in the cytoplasm. It carries out the reaction RX + glutathione = an S-substituted glutathione + a halide anion + H(+). Functionally, conjugation of reduced glutathione to a wide number of exogenous and endogenous hydrophobic electrophiles. The polypeptide is Glutathione S-transferase Mu 5 (Gstm5) (Rattus norvegicus (Rat)).